Reading from the N-terminus, the 419-residue chain is UDP-N-acetylglucosamine 1-carboxyvinyltransferase (419 aa).

22–23 contributes to the phosphoenolpyruvate binding site; it reads KN. UDP-N-acetyl-alpha-D-glucosamine is bound at residue R93. C117 (proton donor) is an active-site residue. A 2-(S-cysteinyl)pyruvic acid O-phosphothioketal modification is found at C117. The UDP-N-acetyl-alpha-D-glucosamine site is built by D307 and I329.

This sequence belongs to the EPSP synthase family. MurA subfamily.

The protein resides in the cytoplasm. It catalyses the reaction phosphoenolpyruvate + UDP-N-acetyl-alpha-D-glucosamine = UDP-N-acetyl-3-O-(1-carboxyvinyl)-alpha-D-glucosamine + phosphate. The protein operates within cell wall biogenesis; peptidoglycan biosynthesis. Functionally, cell wall formation. Adds enolpyruvyl to UDP-N-acetylglucosamine. The protein is UDP-N-acetylglucosamine 1-carboxyvinyltransferase of Shewanella sediminis (strain HAW-EB3).